A 502-amino-acid chain; its full sequence is NAD(P)H-quinone oxidoreductase subunit 2, chloroplastic (502 aa).

14 helical membrane-spanning segments follow: residues 15-35 (VLPE…DLIF), 42-62 (VLPY…LFQW), 79-99 (LSIA…LLSI), 108-128 (TLSE…LLCG), 132-152 (ILMI…LTGY), 167-187 (LLIG…LYGL), 210-230 (LASL…IAAA), 253-275 (VSSK…PYII), 278-298 (WHNI…IIAI), 307-327 (LGYS…AGNI), 334-354 (LVYM…VILF), 375-395 (ILAL…PFGG), 413-433 (LLVF…IKII), and 468-488 (ILIC…IISI).

This sequence belongs to the complex I subunit 2 family. NDH is composed of at least 16 different subunits, 5 of which are encoded in the nucleus.

The protein localises to the plastid. It localises to the chloroplast thylakoid membrane. The enzyme catalyses a plastoquinone + NADH + (n+1) H(+)(in) = a plastoquinol + NAD(+) + n H(+)(out). It catalyses the reaction a plastoquinone + NADPH + (n+1) H(+)(in) = a plastoquinol + NADP(+) + n H(+)(out). Functionally, NDH shuttles electrons from NAD(P)H:plastoquinone, via FMN and iron-sulfur (Fe-S) centers, to quinones in the photosynthetic chain and possibly in a chloroplast respiratory chain. The immediate electron acceptor for the enzyme in this species is believed to be plastoquinone. Couples the redox reaction to proton translocation, and thus conserves the redox energy in a proton gradient. In Mesostigma viride (Green alga), this protein is NAD(P)H-quinone oxidoreductase subunit 2, chloroplastic.